A 48-amino-acid chain; its full sequence is Light-harvesting polypeptide B-885 beta-1 chain (48 aa).

Topologically, residues 1-20 are cytoplasmic; the sequence is AEDRKSLSGLTEQEAQEFGT. A helical membrane pass occupies residues 21-43; sequence LYTQGVAFVAVIAVVAHALVWAW. An a bacteriochlorophyll-binding site is contributed by H37. The Periplasmic segment spans residues 44–48; that stretch reads RPWLQ.

This sequence belongs to the antenna complex beta subunit family. The core complex is formed by different alpha and beta chains, binding bacteriochlorophyll molecules, and arranged most probably in tetrameric structures disposed around the reaction center. The non-pigmented gamma chains may constitute additional components.

The protein resides in the cell inner membrane. Antenna complexes are light-harvesting systems, which transfer the excitation energy to the reaction centers. The sequence is that of Light-harvesting polypeptide B-885 beta-1 chain from Rhodocyclus tenuis (Rhodospirillum tenue).